The chain runs to 128 residues: Large ribosomal subunit protein bL17 (128 aa).

It belongs to the bacterial ribosomal protein bL17 family. As to quaternary structure, part of the 50S ribosomal subunit. Contacts protein L32.

In Streptococcus pyogenes serotype M5 (strain Manfredo), this protein is Large ribosomal subunit protein bL17.